Reading from the N-terminus, the 452-residue chain is Low-affinity putrescine importer PlaP (452 aa).

Residues 1-16 (MSHNVTPNTSRVELRK) lie on the Cytoplasmic side of the membrane. The chain crosses the membrane as a helical span at residues 17–37 (TLTLVPVVMMGLAYMQPMTLF). Over 38–48 (DTFGIVSGLTD) the chain is Periplasmic. The chain crosses the membrane as a helical span at residues 49–69 (GHVPTAYAFALIAILFTALSY). Residues 70-95 (GKLVRRYPSAGSAYTYAQKSISPTVG) are Cytoplasmic-facing. Residues 96-116 (FMVGWSSLLDYLFAPMINILL) traverse the membrane as a helical segment. The Periplasmic portion of the chain corresponds to 117–123 (AKIYFEA). The helical transmembrane segment at 124-144 (LVPSIPSWMFVVALVAFMTAF) threads the bilayer. Topologically, residues 145–158 (NLRSLKSVANFNTV) are cytoplasmic. A helical membrane pass occupies residues 159–179 (IVVLQVVLIAVILGMVVYGVF). Over 180–199 (EGEGAGTLASTRPFWSGDAH) the chain is Periplasmic. The helical transmembrane segment at 200 to 220 (VIPMITGATILCFSFTGFDGI) threads the bilayer. Topologically, residues 221-237 (SNLSEETKDAERVIPRA) are cytoplasmic. Residues 238–258 (IFLTALIGGMIFIFATYFLQL) form a helical membrane-spanning segment. The Periplasmic segment spans residues 259-283 (YFPDISRFKDPDASQPEIMLYVAGK). A helical transmembrane segment spans residues 284–304 (AFQVGALIFSTITVLASGMAA). The Cytoplasmic portion of the chain corresponds to 305 to 339 (HAGVARLMYVMGRDGVFPKSFFGYVHPKWRTPAMN). 2 consecutive transmembrane segments (helical) span residues 340–360 (IILV…MATA) and 361–381 (LINF…ISQF). Residues 382 to 394 (WIREKRNKTLKDH) lie on the Cytoplasmic side of the membrane. Residues 395–415 (FQYLFLPMCGALTVGALWVNL) form a helical membrane-spanning segment. Residues 416-417 (EE) are Periplasmic-facing. A helical transmembrane segment spans residues 418–438 (SSMVLGLIWAAIGLIYLACVT). The Cytoplasmic segment spans residues 439–452 (KSFRNPVPQYEDVA).

The protein belongs to the amino acid-polyamine-organocation (APC) superfamily.

The protein resides in the cell inner membrane. It catalyses the reaction putrescine(in) + H(+)(in) = putrescine(out) + H(+)(out). Functionally, putrescine importer. This chain is Low-affinity putrescine importer PlaP (plaP), found in Escherichia coli O157:H7.